Consider the following 1448-residue polypeptide: Protein clueless (1448 aa).

Disordered regions lie at residues 1–96, 110–129, and 265–286; these read MALE…HAEK, NANVEKPQEGGAPDAEADGD, and RTRPDSVDCTPPEYVTPGVSDP. Low complexity-rich tracts occupy residues 9–26 and 41–66; these read NSNATATGDATATATKAS and NLNPNSNQQNSNQNLVNGNGTAADGP. Over residues 68 to 77 the composition is skewed to basic residues; that stretch reads AKKKGKKNRN. A compositionally biased stretch (polar residues) spans 78–88; that stretch reads KSPTEPTTEAV. Position 270 is a phosphoserine (serine 270). Positions 424–666 constitute a Clu domain; the sequence is RAEDAFSSKL…RTFPPDVNFL (243 aa). 3 disordered regions span residues 726–773, 958–1010, and 1414–1448; these read SEKS…SGEA, AVSS…SASD, and GEAEDAVSKDIKEQPEAGKQLTNGDKAAATEATSS. Basic and acidic residues predominate over residues 748-769; it reads GAEKPDDKEKKNEEEEKKERST. Basic residues predominate over residues 966–981; that stretch reads KKRGNGGKHNKHKSSK. Residues 986–1007 are compositionally biased toward low complexity; the sequence is QQQQQTTGNQNGSSSGSSNSSS. Positions 1419–1429 are enriched in basic and acidic residues; the sequence is AVSKDIKEQPE.

Belongs to the CLU family.

It localises to the cytoplasm. Its function is as follows. mRNA-binding protein involved in proper cytoplasmic distribution of mitochondria. This chain is Protein clueless, found in Drosophila melanogaster (Fruit fly).